Reading from the N-terminus, the 303-residue chain is Probable cell division protein WhiA (303 aa).

The H-T-H motif DNA-binding region spans 272 to 303 (SIQQLADSLSRPLTKSGVNHRLRKINKIADEL).

It belongs to the WhiA family.

Functionally, involved in cell division and chromosome segregation. The chain is Probable cell division protein WhiA from Streptococcus sanguinis (strain SK36).